The following is a 63-amino-acid chain: Small ribosomal subunit protein bS21 (63 aa).

It belongs to the bacterial ribosomal protein bS21 family.

This chain is Small ribosomal subunit protein bS21, found in Azobacteroides pseudotrichonymphae genomovar. CFP2.